The primary structure comprises 164 residues: 6,7-dimethyl-8-ribityllumazine synthase (164 aa).

5-amino-6-(D-ribitylamino)uracil is bound by residues phenylalanine 22, alanine 56–glutamate 58, and alanine 80–isoleucine 82. (2S)-2-hydroxy-3-oxobutyl phosphate is bound at residue aspartate 85–threonine 86. The active-site Proton donor is the histidine 88. Leucine 113 contacts 5-amino-6-(D-ribitylamino)uracil. Residue arginine 127 participates in (2S)-2-hydroxy-3-oxobutyl phosphate binding.

The protein belongs to the DMRL synthase family.

The enzyme catalyses (2S)-2-hydroxy-3-oxobutyl phosphate + 5-amino-6-(D-ribitylamino)uracil = 6,7-dimethyl-8-(1-D-ribityl)lumazine + phosphate + 2 H2O + H(+). The protein operates within cofactor biosynthesis; riboflavin biosynthesis; riboflavin from 2-hydroxy-3-oxobutyl phosphate and 5-amino-6-(D-ribitylamino)uracil: step 1/2. In terms of biological role, catalyzes the formation of 6,7-dimethyl-8-ribityllumazine by condensation of 5-amino-6-(D-ribitylamino)uracil with 3,4-dihydroxy-2-butanone 4-phosphate. This is the penultimate step in the biosynthesis of riboflavin. The chain is 6,7-dimethyl-8-ribityllumazine synthase from Gemmatimonas aurantiaca (strain DSM 14586 / JCM 11422 / NBRC 100505 / T-27).